A 1331-amino-acid chain; its full sequence is DNA replication ATP-dependent helicase/nuclease JHS1 (1331 aa).

The tract at residues 1-98 (MPPRKKPKSS…DMDQQLTEAS (98 aa)) is disordered. Residues 2 to 8 (PPRKKPK) carry the Nuclear localization signal motif. A compositionally biased stretch (polar residues) spans 11–31 (ALKSNKQSSANHSSQPSTFGI). The segment covering 40–52 (QNSQSTSNSHTST) has biased composition (low complexity). Residues 57-81 (DQQNVNGLASDTAVLTPQNPLGTSN) are compositionally biased toward polar residues. The span at 82-91 (EKPDESKDMD) shows a compositional bias: basic and acidic residues. A nuclease activity region spans residues 362-811 (ECALYLWDEW…CKLRTGDRVI (450 aa)). [4Fe-4S] cluster is bound by residues Cys-422, Cys-666, Cys-669, and Cys-675. Residues 812–1331 (LRTEVSHLTV…LNLLPGDLKP (520 aa)) form a helicase activity region. In terms of domain architecture, UvrD-like helicase ATP-binding spans 924–1271 (NNDQRQAILK…VRSREKPRSS (348 aa)). Residue 945-952 (GMPGTGKT) participates in ATP binding.

This sequence belongs to the DNA2/NAM7 helicase family. Requires [4Fe-4S] cluster as cofactor. In terms of tissue distribution, strongly expressed in meristems, including both root and shoot apical meristems (RAM and SAM). Also present in the vasculature and in young floral tissues.

The protein localises to the nucleus. It is found in the chromosome. The enzyme catalyses ATP + H2O = ADP + phosphate + H(+). Its function is as follows. Essential protein required during embryogenesis. Key enzyme involved in DNA replication and damage repair, shoot apical meristem (SAM) maintenance, and development. Involved in Okazaki fragments processing. Possesses different enzymatic activities, such as single-stranded DNA (ssDNA)-dependent ATPase, 5'-3' helicase and endonuclease activities. While the ATPase and endonuclease activities are well-defined and play a key role in Okazaki fragments processing and DSB repair, the 5'-3' DNA helicase activity is atypical: it cannot load onto its tracking strand internally and has an absolute free 5'-end requirement. This is DNA replication ATP-dependent helicase/nuclease JHS1 from Arabidopsis thaliana (Mouse-ear cress).